The chain runs to 158 residues: NAD(P)H-quinone oxidoreductase subunit J, chloroplastic (158 aa).

It belongs to the complex I 30 kDa subunit family. In terms of assembly, NDH is composed of at least 16 different subunits, 5 of which are encoded in the nucleus.

It is found in the plastid. It localises to the chloroplast thylakoid membrane. The enzyme catalyses a plastoquinone + NADH + (n+1) H(+)(in) = a plastoquinol + NAD(+) + n H(+)(out). It catalyses the reaction a plastoquinone + NADPH + (n+1) H(+)(in) = a plastoquinol + NADP(+) + n H(+)(out). Its function is as follows. NDH shuttles electrons from NAD(P)H:plastoquinone, via FMN and iron-sulfur (Fe-S) centers, to quinones in the photosynthetic chain and possibly in a chloroplast respiratory chain. The immediate electron acceptor for the enzyme in this species is believed to be plastoquinone. Couples the redox reaction to proton translocation, and thus conserves the redox energy in a proton gradient. The polypeptide is NAD(P)H-quinone oxidoreductase subunit J, chloroplastic (Buxus microphylla (Littleleaf boxwood)).